The chain runs to 68 residues: DNA-directed RNA polymerase subunit omega (68 aa).

The protein belongs to the RNA polymerase subunit omega family. The RNAP catalytic core consists of 2 alpha, 1 beta, 1 beta' and 1 omega subunit. When a sigma factor is associated with the core the holoenzyme is formed, which can initiate transcription.

The catalysed reaction is RNA(n) + a ribonucleoside 5'-triphosphate = RNA(n+1) + diphosphate. Functionally, promotes RNA polymerase assembly. Latches the N- and C-terminal regions of the beta' subunit thereby facilitating its interaction with the beta and alpha subunits. This is DNA-directed RNA polymerase subunit omega from Nitrosospira multiformis (strain ATCC 25196 / NCIMB 11849 / C 71).